The chain runs to 318 residues: tRNA dimethylallyltransferase (318 aa).

An ATP-binding site is contributed by 16-23 (GPTASGKS). 18-23 (TASGKS) contacts substrate. Interaction with substrate tRNA stretches follow at residues 41–44 (DSRQ) and 165–169 (QRLIR).

This sequence belongs to the IPP transferase family. In terms of assembly, monomer. Requires Mg(2+) as cofactor.

The enzyme catalyses adenosine(37) in tRNA + dimethylallyl diphosphate = N(6)-dimethylallyladenosine(37) in tRNA + diphosphate. Its function is as follows. Catalyzes the transfer of a dimethylallyl group onto the adenine at position 37 in tRNAs that read codons beginning with uridine, leading to the formation of N6-(dimethylallyl)adenosine (i(6)A). This Pelodictyon phaeoclathratiforme (strain DSM 5477 / BU-1) protein is tRNA dimethylallyltransferase.